We begin with the raw amino-acid sequence, 240 residues long: Probable metal transport system ATP-binding protein TM_0124 (240 aa).

Residues 4 to 223 (VEVKNLTYRI…LKKIFTDFDI (220 aa)) form the ABC transporter domain. 36–43 (GPNGAGKT) contacts ATP.

Belongs to the ABC transporter superfamily.

Part of an ATP-driven transport system TM_0123/TM_0124/TM_0125 for a metal. Probably responsible for energy coupling to the transport system. This Thermotoga maritima (strain ATCC 43589 / DSM 3109 / JCM 10099 / NBRC 100826 / MSB8) protein is Probable metal transport system ATP-binding protein TM_0124.